The chain runs to 924 residues: Isoleucine--tRNA ligase (924 aa).

The 'HIGH' region motif lies at 57-67 (PYANGDIHMGH). Residue E552 coordinates L-isoleucyl-5'-AMP. Positions 593–597 (KMSKS) match the 'KMSKS' region motif. An ATP-binding site is contributed by K596. Zn(2+)-binding residues include C891, C894, C911, and C914.

Belongs to the class-I aminoacyl-tRNA synthetase family. IleS type 1 subfamily. As to quaternary structure, monomer. Requires Zn(2+) as cofactor.

It localises to the cytoplasm. It carries out the reaction tRNA(Ile) + L-isoleucine + ATP = L-isoleucyl-tRNA(Ile) + AMP + diphosphate. Its function is as follows. Catalyzes the attachment of isoleucine to tRNA(Ile). As IleRS can inadvertently accommodate and process structurally similar amino acids such as valine, to avoid such errors it has two additional distinct tRNA(Ile)-dependent editing activities. One activity is designated as 'pretransfer' editing and involves the hydrolysis of activated Val-AMP. The other activity is designated 'posttransfer' editing and involves deacylation of mischarged Val-tRNA(Ile). This Geobacillus thermodenitrificans (strain NG80-2) protein is Isoleucine--tRNA ligase.